We begin with the raw amino-acid sequence, 402 residues long: MHEYPVVLVINSGSSSIKFSVLDAQRCEVLLAGIAEGINSGSATLSVNGAAPVALAQRGYEPALAAICAELEKRSLIDSVALIGHRVAHGGNLFQQSAIVDDEVMEKIRRISPLAPLHNYANLSGMVSARHLFPGVTQVAVFDTSFHQTLAPEAWLYALPYRYAQEYGVRRYGFHGTSHRYVSQRAHHLLGLSEADSGLVIAHLGNGASICAVRNGRSVDTSMGMTPLEGLMMGTRSGDVDFGALAWIASQTGQSIADLEQMVNTESGLLGISGLSSDLRVLERAQREGHQRADLAIRTFVHRIARHIGGHAASLRRLDGIIFTGGIGENSALIRRMVLEHLSVFGITLAPDKNNMPGSAGERIISGEDSAVICAVIPTDEERMIALDALRLGKIMPSIEYA.

The ATP site is built by N11 and K18. Residue N11 coordinates Mg(2+). A substrate-binding site is contributed by R86. D143 acts as the Proton donor/acceptor in catalysis. Residues H175, H203–G207, D278–R280, and G326–N330 contribute to the ATP site.

Belongs to the acetokinase family. TdcD subfamily. Homodimer. Requires Mg(2+) as cofactor.

The enzyme catalyses propanoate + ATP = propanoyl phosphate + ADP. The protein operates within amino-acid degradation; L-threonine degradation via propanoate pathway; propanoate from L-threonine: step 4/4. Its function is as follows. Catalyzes the conversion of propionyl phosphate and ADP to propionate and ATP. The protein is Propionate kinase of Edwardsiella piscicida.